Consider the following 293-residue polypeptide: Elongation factor Ts (293 aa).

An involved in Mg(2+) ion dislocation from EF-Tu region spans residues 80–83 (TDFV).

It belongs to the EF-Ts family.

The protein localises to the cytoplasm. In terms of biological role, associates with the EF-Tu.GDP complex and induces the exchange of GDP to GTP. It remains bound to the aminoacyl-tRNA.EF-Tu.GTP complex up to the GTP hydrolysis stage on the ribosome. The protein is Elongation factor Ts of Aeromonas hydrophila subsp. hydrophila (strain ATCC 7966 / DSM 30187 / BCRC 13018 / CCUG 14551 / JCM 1027 / KCTC 2358 / NCIMB 9240 / NCTC 8049).